Reading from the N-terminus, the 368-residue chain is Isopentenyl-diphosphate delta-isomerase (368 aa).

7 to 8 (RK) lines the substrate pocket. FMN is bound by residues T65, 66 to 68 (GMT), S96, and N125. Substrate is bound at residue 96–98 (SQR). Position 160 (Q160) interacts with substrate. E161 lines the Mg(2+) pocket. FMN contacts are provided by residues K193, S218, T223, 275–277 (GIR), and 296–297 (AL).

The protein belongs to the IPP isomerase type 2 family. In terms of assembly, homooctamer. Dimer of tetramers. It depends on FMN as a cofactor. NADPH serves as cofactor. The cofactor is Mg(2+).

Its subcellular location is the cytoplasm. It catalyses the reaction isopentenyl diphosphate = dimethylallyl diphosphate. Involved in the biosynthesis of isoprenoids. Catalyzes the 1,3-allylic rearrangement of the homoallylic substrate isopentenyl (IPP) to its allylic isomer, dimethylallyl diphosphate (DMAPP). In Saccharolobus islandicus (strain M.16.27) (Sulfolobus islandicus), this protein is Isopentenyl-diphosphate delta-isomerase.